The chain runs to 118 residues: Deoxynogalonate monooxygenase (118 aa).

Residues 14–100 (VTFVNRFTVH…ALSTSEHGLF (87 aa)) form the ABM domain.

In terms of assembly, homodimer.

It carries out the reaction deoxynogalonate + O2 = nogalonate + H2O + H(+). Its pathway is antibiotic biosynthesis. Functionally, involved in the biosynthesis of the anthracycline (aromatic polyketide) antibiotic nogalamycin. Catalyzes the oxygenation of 12-deoxy-nogalonic acid at position 12 to yield nogalonic acid. The protein is Deoxynogalonate monooxygenase of Streptomyces nogalater.